The chain runs to 218 residues: Small ribosomal subunit protein uS3c (218 aa).

Positions 47 to 118 constitute a KH type-2 domain; the sequence is VQKHMRISSG…RLNIAIARVA (72 aa).

Belongs to the universal ribosomal protein uS3 family. As to quaternary structure, part of the 30S ribosomal subunit.

It is found in the plastid. The protein resides in the chloroplast. This chain is Small ribosomal subunit protein uS3c (rps3), found in Nymphaea alba (White water-lily).